We begin with the raw amino-acid sequence, 1074 residues long: Formin-G (1074 aa).

Positions 34-423 (LQMQQGSKTY…DKINEFEKKI (390 aa)) constitute a GBD/FH3 domain. Disordered regions lie at residues 476–507 (QSISPSQDSSNNQKASSSSSNTSTLNDSDIQS) and 549–639 (FTPT…NPSS). Low complexity predominate over residues 481 to 503 (SQDSSNNQKASSSSSNTSTLNDS). Residues 502-530 (DSDIQSIQSSLKEATLEIERLKLAIEEKM) adopt a coiled-coil conformation. A compositionally biased stretch (polar residues) spans 549–561 (FTPTSPDISNDGQ). Residues 568–610 (APPPSPSPPPPISGGGAPPPPPPPPPPPSGGGAPPPPPPPPPS) are compositionally biased toward pro residues. The FH1 domain maps to 597–623 (GGGAPPPPPPPPPSGGKKAGAPGAPPT). In terms of domain architecture, FH2 spans 631-1031 (NKPVINPSSK…ASGDNGAVQN (401 aa)). A coiled-coil region spans residues 914–971 (DINDLEKQFNISKNNCKKVLEANIPSSSKFQSTIGSFLEKTEIDIKNLKENQKNIVDS). The DAD domain occupies 1037–1073 (GADPLAALANAIKLGQTGLRKRPGPENSSGGSQLNLN). A disordered region spans residues 1053 to 1074 (TGLRKRPGPENSSGGSQLNLNK). The segment covering 1062–1074 (ENSSGGSQLNLNK) has biased composition (polar residues).

The protein belongs to the formin homology family. Diaphanous subfamily. As to quaternary structure, interacts (via GBD/FH3 domain) with activated Rho-GTPases.

In terms of biological role, formins play an important role in the nucleation of actin and the formation of linear actin filaments. This Dictyostelium discoideum (Social amoeba) protein is Formin-G (forG).